The primary structure comprises 299 residues: 4-hydroxy-tetrahydrodipicolinate synthase (299 aa).

Thr-45 provides a ligand contact to pyruvate. Tyr-133 acts as the Proton donor/acceptor in catalysis. The active-site Schiff-base intermediate with substrate is Lys-161. Ile-203 provides a ligand contact to pyruvate.

The protein belongs to the DapA family. As to quaternary structure, homotetramer; dimer of dimers.

Its subcellular location is the cytoplasm. The enzyme catalyses L-aspartate 4-semialdehyde + pyruvate = (2S,4S)-4-hydroxy-2,3,4,5-tetrahydrodipicolinate + H2O + H(+). Its pathway is amino-acid biosynthesis; L-lysine biosynthesis via DAP pathway; (S)-tetrahydrodipicolinate from L-aspartate: step 3/4. Functionally, catalyzes the condensation of (S)-aspartate-beta-semialdehyde [(S)-ASA] and pyruvate to 4-hydroxy-tetrahydrodipicolinate (HTPA). This chain is 4-hydroxy-tetrahydrodipicolinate synthase, found in Blochmanniella pennsylvanica (strain BPEN).